The primary structure comprises 521 residues: Vang-like protein 2-B (521 aa).

A compositionally biased stretch (low complexity) spans 1-18 (MDNDSQYSGYSYKSGQSR). Residues 1–73 (MDNDSQYSGY…RDDNWGETTT (73 aa)) form a disordered region. Residues 1–108 (MDNDSQYSGY…AKLDCSRHLG (108 aa)) lie on the Cytoplasmic side of the membrane. Basic residues predominate over residues 19-33 (SSRKHRDRRERHRSK). The span at 57–67 (ESTRGEDRDDN) shows a compositional bias: basic and acidic residues. The helical transmembrane segment at 109-129 (VVIAGALALLSFLTPIAFMLL) threads the bilayer. Over 130–147 (PQILWREDLEQCGTACEG) the chain is Extracellular. Residues 148–168 (LFISVAFKLLILLLGSWALFF) form a helical membrane-spanning segment. Topologically, residues 169 to 178 (RRPKAFFPRV) are cytoplasmic. A helical membrane pass occupies residues 179–199 (FVFRALLMVLVFLLVVSYWLF). The Extracellular portion of the chain corresponds to 200-218 (YGVRILESRDKNYQGIVQY). Residues 219-239 (AVSLVDALLFVHYLAVVLLEL) form a helical membrane-spanning segment. The Cytoplasmic portion of the chain corresponds to 240-521 (RQLQPQFTIK…VMRLQSETSV (282 aa)). Positions 518 to 521 (ETSV) match the PDZ-binding motif.

Belongs to the Vang family. As to quaternary structure, interacts with dvl/dsh. Interacts with prickle3. During gastrulation, broadly expressed in the dorsal region in both mesodermal and neural tissues. From the neurula stages, expressed throughout the neural tube. In tailbud stages, expression declines in the anterior notochord but remains strong in the posterior notochord and in the neural tube. Also weakly expressed in the prenephritic region of late tailbud embryos.

It localises to the cell membrane. In terms of biological role, has a role in non-canonical Wnt/planar cell polarity (PCP) signaling; can recruit dvl/dsh and prickle from the cytoplasm to the plasma membrane. Acts in a PCP complex to regulate the polarized assembly of fibronectrin on the surface of the mesoderm during gastrulation. Regulates convergent extension in both dorsal mesoderm and neural tissue without affecting cell fate. Regulates neural fold closure during neurulation. May be required for cell surface localization of fzd3 and fzd6 in the inner ear. In Xenopus laevis (African clawed frog), this protein is Vang-like protein 2-B (vangl2-b).